A 257-amino-acid chain; its full sequence is Galactitol 2-dehydrogenase (257 aa).

NAD(+) is bound by residues 21–23 (RAI), 67–68 (DV), Asn94, Tyr162, and Lys166. The active-site Proton acceptor is Tyr162.

This sequence belongs to the short-chain dehydrogenases/reductases (SDR) family. In terms of assembly, homotetramer. The cofactor is Mg(2+).

The catalysed reaction is galactitol + NAD(+) = keto-D-tagatose + NADH + H(+). In terms of biological role, catalyzes the oxidation of galactitol to D-tagatose. Also catalyzes the oxidation of a wide range of substrates, including polyvalent aliphatic alcohols and polyols, to the corresponding ketones and ketoses. Galactitol is the preferred substrate. This is Galactitol 2-dehydrogenase from Rhizobium johnstonii (strain DSM 114642 / LMG 32736 / 3841) (Rhizobium leguminosarum bv. viciae).